The following is a 352-amino-acid chain: Replication-associated protein (352 aa).

The region spanning 9-117 (QINAKNYFLT…DGDTLVWGEF (109 aa)) is the CRESS-DNA virus Rep endonuclease domain. The RCR-1 motif lies at 16–19 (FLTY). Residues Glu-50, His-58, and His-60 each coordinate a divalent metal cation. An RCR-2 motif is present at residues 58–60 (HLH). Catalysis depends on Tyr-104, which acts as the For DNA cleavage activity. The short motif at 104 to 107 (YIDK) is the RCR-3 element. Asp-108 lines the a divalent metal cation pocket. The segment at 144–154 (KEEALQIIREK) is binding to RBR1. An oligomerization region spans residues 157–177 (EKYLFQFHNLNSNLDRIFDKT). Residue 223-230 (GDSRTGKT) coordinates ATP.

The protein belongs to the geminiviridae Rep protein family. In terms of assembly, homooligomer. Interacts with the replication enhancer protein (REn). Interacts with host retinoblastoma-related protein 1 (RBR1), and may thereby induce the transcription of host replicative enzymes even if the cell is not dividing anymore. Interacts with host PCNA. Interacts with host SCE1 protein. Interacts with host GRIK1, GRIK2, GRIMP and histone H3. It depends on Mg(2+) as a cofactor. The cofactor is Mn(2+).

The protein resides in the host nucleus. Its function is as follows. Essential for the replication of viral ssDNA. The closed circular ssDNA genome is first converted to a superhelical dsDNA. Rep binds a specific region at the genome origin of replication. It introduces an endonucleolytic nick within the conserved sequence 5'-TAATATTAC-3' in the intergenic region of the genome present in all geminiviruses, thereby initiating the rolling circle replication (RCR). Following cleavage, binds covalently to the 5'-phosphate of DNA as a tyrosyl ester. The cleavage gives rise to a free 3'-OH that serves as a primer for the cellular DNA polymerase. The polymerase synthesizes the (+) strand DNA by rolling circle mechanism. After one round of replication, a Rep-catalyzed nucleotidyl transfer reaction releases a circular single-stranded virus genome, thereby terminating the replication. Displays origin-specific DNA cleavage, nucleotidyl transferase, ATPase and helicase activities. The chain is Replication-associated protein from Solanum lycopersicum (Tomato).